Reading from the N-terminus, the 101-residue chain is MNSHFVSAHTPFYINTKEGRYLVLKAVKVCDVRTVECEGSKASCVLKVDKPSSPTCERRPSSPSRCERMNNPGKQVPFMRTDMLQNMFAANRDNVTSRLLN.

Residues lysine 50–glycine 73 form a disordered region. The segment covering cysteine 56–arginine 68 has biased composition (basic and acidic residues).

Belongs to the orthopoxvirus OPG062 family. Self-associates to form high molecular-weight forms. Interacts with protein OPG157. Interacts with host RICTOR and RPTOR; these interactions disrupt the mTORC1 and mTORC2 crosstalk.

The protein resides in the virion. In terms of biological role, plays an essential role in virion assembly and morphogenesis. Also plays a role in the inhibition of host immune response by dysregulating mTOR. Sequesters host RICTOR and RPTOR, thereby disrupting mTORC1 and mTORC2 crosstalk. In turn, blocks the host antiviral response in part through mTOR-dependent degradation of cGAS, the primary poxvirus sensor. This chain is Phosphoprotein OPG062 (OPG062), found in Monkeypox virus.